A 333-amino-acid polypeptide reads, in one-letter code: 4-hydroxy-3-methylbut-2-enyl diphosphate reductase (333 aa).

Cysteine 34 provides a ligand contact to [4Fe-4S] cluster. (2E)-4-hydroxy-3-methylbut-2-enyl diphosphate-binding residues include histidine 63 and histidine 96. Histidine 63 and histidine 96 together coordinate dimethylallyl diphosphate. Isopentenyl diphosphate contacts are provided by histidine 63 and histidine 96. Cysteine 118 is a [4Fe-4S] cluster binding site. (2E)-4-hydroxy-3-methylbut-2-enyl diphosphate is bound at residue histidine 146. Histidine 146 is a binding site for dimethylallyl diphosphate. Residue histidine 146 participates in isopentenyl diphosphate binding. Glutamate 148 (proton donor) is an active-site residue. Position 186 (threonine 186) interacts with (2E)-4-hydroxy-3-methylbut-2-enyl diphosphate. Residue cysteine 216 participates in [4Fe-4S] cluster binding. Residues serine 244, serine 245, asparagine 246, and serine 289 each coordinate (2E)-4-hydroxy-3-methylbut-2-enyl diphosphate. The dimethylallyl diphosphate site is built by serine 244, serine 245, asparagine 246, and serine 289. Positions 244, 245, 246, and 289 each coordinate isopentenyl diphosphate.

The protein belongs to the IspH family. It depends on [4Fe-4S] cluster as a cofactor.

The catalysed reaction is isopentenyl diphosphate + 2 oxidized [2Fe-2S]-[ferredoxin] + H2O = (2E)-4-hydroxy-3-methylbut-2-enyl diphosphate + 2 reduced [2Fe-2S]-[ferredoxin] + 2 H(+). It carries out the reaction dimethylallyl diphosphate + 2 oxidized [2Fe-2S]-[ferredoxin] + H2O = (2E)-4-hydroxy-3-methylbut-2-enyl diphosphate + 2 reduced [2Fe-2S]-[ferredoxin] + 2 H(+). Its pathway is isoprenoid biosynthesis; dimethylallyl diphosphate biosynthesis; dimethylallyl diphosphate from (2E)-4-hydroxy-3-methylbutenyl diphosphate: step 1/1. It participates in isoprenoid biosynthesis; isopentenyl diphosphate biosynthesis via DXP pathway; isopentenyl diphosphate from 1-deoxy-D-xylulose 5-phosphate: step 6/6. Functionally, catalyzes the conversion of 1-hydroxy-2-methyl-2-(E)-butenyl 4-diphosphate (HMBPP) into a mixture of isopentenyl diphosphate (IPP) and dimethylallyl diphosphate (DMAPP). Acts in the terminal step of the DOXP/MEP pathway for isoprenoid precursor biosynthesis. In Mycobacterium sp. (strain KMS), this protein is 4-hydroxy-3-methylbut-2-enyl diphosphate reductase.